The primary structure comprises 254 residues: Type III pantothenate kinase (254 aa).

6–13 (DVGNTNTT) contributes to the ATP binding site. Substrate contacts are provided by residues tyrosine 100 and 107–110 (GADR). The Proton acceptor role is filled by aspartate 109. Aspartate 129 lines the K(+) pocket. Residue threonine 132 participates in ATP binding. Threonine 184 contributes to the substrate binding site.

Belongs to the type III pantothenate kinase family. As to quaternary structure, homodimer. The cofactor is NH4(+). K(+) serves as cofactor.

Its subcellular location is the cytoplasm. The enzyme catalyses (R)-pantothenate + ATP = (R)-4'-phosphopantothenate + ADP + H(+). It participates in cofactor biosynthesis; coenzyme A biosynthesis; CoA from (R)-pantothenate: step 1/5. Its function is as follows. Catalyzes the phosphorylation of pantothenate (Pan), the first step in CoA biosynthesis. This chain is Type III pantothenate kinase, found in Anaeromyxobacter dehalogenans (strain 2CP-1 / ATCC BAA-258).